Consider the following 59-residue polypeptide: Metallothionein-1B (59 aa).

Residues 1 to 29 (MPGPCCNDKCVCQEGGCKAGCQCTSCRCS) are beta. The a divalent metal cation site is built by C5, C6, C10, C17, C21, C23, C26, C28, C31, C34, C38, C40, C46, C50, C54, C56, and C57. The tract at residues 30–59 (PCQKCTSGCKCATKEECSKTCTKPCSCCPK) is alpha.

The protein belongs to the metallothionein superfamily. Type 3 family.

In terms of biological role, binds six divalent metal ions. Known to bind copper and cadmium. The polypeptide is Metallothionein-1B (Callinectes sapidus (Blue crab)).